The following is a 569-amino-acid chain: MIKDFDPSEFVGKTPTKIFAFGGIQEVGKNMYGIEYDDEIIIIDCGIKFASDDLLGIDGIIPSFEYLIENQAKVKALFITHGHEDHIGGVPYLLKQVDVPVIYAPRIAASLILKKVNEHKDAKLNKVVVYDDFSNFETKHFKIDFYRVNHSIPDAFGVCVQTPNGNIVESGDFRFDFAAGGEMLDVHKVVKIAERNVHVFMCETTNAEIPGFSQSEKLIYRNINKIIKEARGRVILTTFASNITRINEIIEIAVNNKRKVCLLGKSMDVNVNISRKIGLMDIDSNDIVEVRDIKNYPDRSILILCTGSQGEDSAALNTMARGKHNWVSLKSTDTIIMSSNPIPGNYAAVENLLNELSKYGVTIFENSPNMKLHASGHATQQELQLMLNLVFPRYLIPIHGEYKMMRTIKNIAQECGINGDDVGLLANGQVMYLIDGKLYYSGEVINADPIYIESRNSSPDLARVIKQRQILSREGMFAVIVVFDKNNNILGMPTLITRGCFFALDSSPLMTKITHSIKRGLENVIQNKRFNTREQMIKELKRVCKETVSYFIWKNKSRNPLISTVLSWV.

Zn(2+) contacts are provided by histidine 81, histidine 83, aspartate 85, histidine 86, histidine 150, and aspartate 172. Position 373 to 377 (373 to 377 (HASGH)) interacts with substrate. Histidine 399 serves as a coordination point for Zn(2+).

The protein belongs to the metallo-beta-lactamase superfamily. RNA-metabolizing metallo-beta-lactamase-like family. Bacterial RNase J subfamily. In terms of assembly, homodimer, may be a subunit of the RNA degradosome. Zn(2+) serves as cofactor.

Its subcellular location is the cytoplasm. An RNase that has 5'-3' exonuclease and possibly endoonuclease activity. Involved in maturation of rRNA and in some organisms also mRNA maturation and/or decay. This chain is Ribonuclease J, found in Mycoplasma pneumoniae (strain ATCC 29342 / M129 / Subtype 1) (Mycoplasmoides pneumoniae).